The chain runs to 424 residues: Adenylosuccinate synthetase (424 aa).

Residues 12–18 and 40–42 contribute to the GTP site; these read GDEGKGK and GHT. Residue Asp-13 is the Proton acceptor of the active site. Mg(2+)-binding residues include Asp-13 and Gly-40. Residues 13-16, 38-41, Thr-130, Arg-144, Asn-220, Thr-235, and Arg-299 contribute to the IMP site; these read DEGK and NAGH. The active-site Proton donor is His-41. A substrate-binding site is contributed by 295–301; that stretch reads VTTGRRR. Residues Arg-301, 327–329, and 412–414 each bind GTP; these read KLD and GTG.

The protein belongs to the adenylosuccinate synthetase family. Homodimer. Mg(2+) serves as cofactor.

The protein localises to the cytoplasm. It carries out the reaction IMP + L-aspartate + GTP = N(6)-(1,2-dicarboxyethyl)-AMP + GDP + phosphate + 2 H(+). It participates in purine metabolism; AMP biosynthesis via de novo pathway; AMP from IMP: step 1/2. Plays an important role in the de novo pathway and in the salvage pathway of purine nucleotide biosynthesis. Catalyzes the first committed step in the biosynthesis of AMP from IMP. The chain is Adenylosuccinate synthetase from Neosartorya fischeri (strain ATCC 1020 / DSM 3700 / CBS 544.65 / FGSC A1164 / JCM 1740 / NRRL 181 / WB 181) (Aspergillus fischerianus).